A 676-amino-acid chain; its full sequence is Palmitoyl-CoA ligase FUM16 (676 aa).

An AMP-binding site is contributed by 245–256 (IMYTSGSTGLPN). An AMP-binding region spans residues 552–655 (KLESIYRTSQ…SGLVTPTMKL (104 aa)).

This sequence belongs to the ATP-dependent AMP-binding enzyme family.

The protein resides in the endoplasmic reticulum. It participates in mycotoxin biosynthesis. In terms of biological role, palmitoyl-CoA ligase; part of the gene cluster that mediates the biosynthesis of fumonisins B1 (FB1), B2 (FB2), B3 (FB3), and B4 (FB4), which are carcinogenic mycotoxins. Plays a role in the synthesis of ceramide and is involved in self-protection from fumonisin B1 toxicity. The biosynthesis starts with the FUM1-catalyzed carbon chain assembly from one molecule of acetyl-CoA, eight molecules of malonyl-CoA, and two molecules of methionine (in S-adenosyl form). The C18 polyketide chain is released from the enzyme by a nucleophilic attack of a carbanion, which is derived from R-carbon of alanine by decarboxylation, on the carbonyl carbon of polyketide acyl chain. This step is catalyzed by the pyridoxal 5'-phosphate-dependent aminoacyl transferase FUM8. The resultant 3-keto intermediate is then stereospecifically reduced to a 3-hydroxyl product by reductase FUM13. Subsequent oxidations at C-10 by the cytochrome P450 monooxygenase FUM2, C-14 and C-15 by FUM6, FUM12 or FUM15, tricarballylic esterification of the hydroxyl groups on C-14 and C-15 by acyltransferase FUM14, and C-5 hydroxylation by 2-keto-glutarate-dependent dioxygenase FUM3 furnish the biosynthesis of fumonisins. The tricarballylic moieties are most likely derived from the citric acid cycle, and their addition to the carbon backbone may involve FUM7, FUM10, FUM11 and FUM14. The protein is Palmitoyl-CoA ligase FUM16 of Gibberella moniliformis (strain M3125 / FGSC 7600) (Maize ear and stalk rot fungus).